The following is a 271-amino-acid chain: Glutamate racemase (271 aa).

Substrate contacts are provided by residues 10-11 (DS) and 42-43 (YG). Cys73 (proton donor/acceptor) is an active-site residue. 74 to 75 (NS) is a binding site for substrate. The Proton donor/acceptor role is filled by Cys183. 184-185 (TH) contributes to the substrate binding site.

It belongs to the aspartate/glutamate racemases family.

The enzyme catalyses L-glutamate = D-glutamate. It participates in cell wall biogenesis; peptidoglycan biosynthesis. In terms of biological role, provides the (R)-glutamate required for cell wall biosynthesis. In Saccharopolyspora erythraea (strain ATCC 11635 / DSM 40517 / JCM 4748 / NBRC 13426 / NCIMB 8594 / NRRL 2338), this protein is Glutamate racemase.